The sequence spans 93 residues: uncharacterized protein (93 aa).

Transmembrane regions (helical) follow at residues 9 to 29 (ITVI…PQLI), 40 to 60 (ISLA…IYGI), and 66 to 86 (PIIV…YLKI).

It localises to the cell membrane. This is an uncharacterized protein from Methanocaldococcus jannaschii (strain ATCC 43067 / DSM 2661 / JAL-1 / JCM 10045 / NBRC 100440) (Methanococcus jannaschii).